Consider the following 276-residue polypeptide: NAD kinase (276 aa).

The active-site Proton acceptor is Asp-68. Residues Asp-68–Gly-69, Arg-73, Asn-138–Glu-139, Lys-149, Asp-168, Thr-179–Ser-184, and Gln-237 contribute to the NAD(+) site.

The protein belongs to the NAD kinase family. A divalent metal cation is required as a cofactor.

It is found in the cytoplasm. The catalysed reaction is NAD(+) + ATP = ADP + NADP(+) + H(+). Its function is as follows. Involved in the regulation of the intracellular balance of NAD and NADP, and is a key enzyme in the biosynthesis of NADP. Catalyzes specifically the phosphorylation on 2'-hydroxyl of the adenosine moiety of NAD to yield NADP. In Methanopyrus kandleri (strain AV19 / DSM 6324 / JCM 9639 / NBRC 100938), this protein is NAD kinase.